A 260-amino-acid polypeptide reads, in one-letter code: 5'-nucleotidase SurE (260 aa).

A divalent metal cation-binding residues include D8, D9, S39, and N93.

It belongs to the SurE nucleotidase family. The cofactor is a divalent metal cation.

Its subcellular location is the cytoplasm. The catalysed reaction is a ribonucleoside 5'-phosphate + H2O = a ribonucleoside + phosphate. Nucleotidase that shows phosphatase activity on nucleoside 5'-monophosphates. The polypeptide is 5'-nucleotidase SurE (Thermofilum pendens (strain DSM 2475 / Hrk 5)).